We begin with the raw amino-acid sequence, 545 residues long: Glucose-6-phosphate isomerase (545 aa).

Residue glutamate 351 is the Proton donor of the active site. Residues histidine 382 and lysine 510 contribute to the active site.

The protein belongs to the GPI family.

It is found in the cytoplasm. It catalyses the reaction alpha-D-glucose 6-phosphate = beta-D-fructose 6-phosphate. It participates in carbohydrate biosynthesis; gluconeogenesis. Its pathway is carbohydrate degradation; glycolysis; D-glyceraldehyde 3-phosphate and glycerone phosphate from D-glucose: step 2/4. Catalyzes the reversible isomerization of glucose-6-phosphate to fructose-6-phosphate. The protein is Glucose-6-phosphate isomerase of Helicobacter pylori (strain G27).